The following is a 217-amino-acid chain: Peptide deformylase 1 (217 aa).

C129 and H171 together coordinate Fe cation. The active site involves E172. Residue H175 coordinates Fe cation.

The protein belongs to the polypeptide deformylase family. Fe(2+) is required as a cofactor.

It catalyses the reaction N-terminal N-formyl-L-methionyl-[peptide] + H2O = N-terminal L-methionyl-[peptide] + formate. Removes the formyl group from the N-terminal Met of newly synthesized proteins. Requires at least a dipeptide for an efficient rate of reaction. N-terminal L-methionine is a prerequisite for activity but the enzyme has broad specificity at other positions. The polypeptide is Peptide deformylase 1 (Bifidobacterium longum (strain NCC 2705)).